A 237-amino-acid chain; its full sequence is Probable transcriptional regulatory protein EAT1b_0153 (237 aa).

It belongs to the TACO1 family. YeeN subfamily.

It is found in the cytoplasm. This Exiguobacterium sp. (strain ATCC BAA-1283 / AT1b) protein is Probable transcriptional regulatory protein EAT1b_0153.